A 327-amino-acid polypeptide reads, in one-letter code: Tyrosine--tRNA ligase (327 aa).

Residue tyrosine 33 participates in L-tyrosine binding. Residues 38–46 (PSGVLHLGH) carry the 'HIGH' region motif. L-tyrosine is bound by residues tyrosine 154, glutamine 158, aspartate 161, and glutamine 176. The 'KMSKS' region motif lies at 212 to 216 (KMSSS). An ATP-binding site is contributed by serine 215.

Belongs to the class-I aminoacyl-tRNA synthetase family. TyrS type 3 subfamily. As to quaternary structure, homodimer.

The protein resides in the cytoplasm. The enzyme catalyses tRNA(Tyr) + L-tyrosine + ATP = L-tyrosyl-tRNA(Tyr) + AMP + diphosphate + H(+). Its function is as follows. Catalyzes the attachment of tyrosine to tRNA(Tyr) in a two-step reaction: tyrosine is first activated by ATP to form Tyr-AMP and then transferred to the acceptor end of tRNA(Tyr). The sequence is that of Tyrosine--tRNA ligase from Halobacterium salinarum (strain ATCC 29341 / DSM 671 / R1).